The chain runs to 505 residues: 2,3-bisphosphoglycerate-independent phosphoglycerate mutase (505 aa).

Mn(2+) contacts are provided by Asp13 and Ser63. Residue Ser63 is the Phosphoserine intermediate of the active site. Residues His124, 153 to 154 (RD), Arg183, Arg189, 254 to 257 (RADR), and Lys330 each bind substrate. Mn(2+) is bound by residues Asp396, His400, Asp437, His438, and His456.

It belongs to the BPG-independent phosphoglycerate mutase family. Monomer. The cofactor is Mn(2+).

It catalyses the reaction (2R)-2-phosphoglycerate = (2R)-3-phosphoglycerate. It participates in carbohydrate degradation; glycolysis; pyruvate from D-glyceraldehyde 3-phosphate: step 3/5. Catalyzes the interconversion of 2-phosphoglycerate and 3-phosphoglycerate. The sequence is that of 2,3-bisphosphoglycerate-independent phosphoglycerate mutase from Dinoroseobacter shibae (strain DSM 16493 / NCIMB 14021 / DFL 12).